The chain runs to 123 residues: Histone H2B.1/H2B.2 (123 aa).

A disordered region spans residues 1-30; sequence MPPKVSGKAAKKAGKAQKNITKGDKKKNRK. An O-linked (GlcNAc) serine glycan is attached at Ser-110. Lys-118 participates in a covalent cross-link: Glycyl lysine isopeptide (Lys-Gly) (interchain with G-Cter in ubiquitin).

The protein belongs to the histone H2B family. In terms of assembly, the nucleosome is a histone octamer containing two molecules each of H2A, H2B, H3 and H4 assembled in one H3-H4 heterotetramer and two H2A-H2B heterodimers. The octamer wraps approximately 147 bp of DNA. Post-translationally, monoubiquitination of Lys-118 gives a specific tag for epigenetic transcriptional activation and is also prerequisite for histone H3 'Lys-4' and 'Lys-79' methylation. GlcNAcylation at Ser-110 promotes monoubiquitination of Lys-118. It fluctuates in response to extracellular glucose, and associates with transcribed genes.

It is found in the nucleus. It localises to the chromosome. Its function is as follows. Core component of nucleosome. Nucleosomes wrap and compact DNA into chromatin, limiting DNA accessibility to the cellular machineries which require DNA as a template. Histones thereby play a central role in transcription regulation, DNA repair, DNA replication and chromosomal stability. DNA accessibility is regulated via a complex set of post-translational modifications of histones, also called histone code, and nucleosome remodeling. This chain is Histone H2B.1/H2B.2, found in Tigriopus californicus (Marine copepod).